A 451-amino-acid polypeptide reads, in one-letter code: UDP-N-acetylmuramate--L-alanine ligase (451 aa).

Residue 110-116 (GTHGKTT) coordinates ATP.

The protein belongs to the MurCDEF family.

The protein resides in the cytoplasm. The catalysed reaction is UDP-N-acetyl-alpha-D-muramate + L-alanine + ATP = UDP-N-acetyl-alpha-D-muramoyl-L-alanine + ADP + phosphate + H(+). It participates in cell wall biogenesis; peptidoglycan biosynthesis. In terms of biological role, cell wall formation. The chain is UDP-N-acetylmuramate--L-alanine ligase from Francisella tularensis subsp. novicida (strain U112).